We begin with the raw amino-acid sequence, 119 residues long: Hydrogenase maturation factor HypA (119 aa).

Residue His-2 coordinates Ni(2+). 4 residues coordinate Zn(2+): Cys-73, Cys-76, Cys-89, and Cys-92.

The protein belongs to the HypA/HybF family.

Its function is as follows. Involved in the maturation of [NiFe] hydrogenases. Required for nickel insertion into the metal center of the hydrogenase. The polypeptide is Hydrogenase maturation factor HypA (Dehalococcoides mccartyi (strain ATCC BAA-2100 / JCM 16839 / KCTC 5957 / BAV1)).